A 488-amino-acid polypeptide reads, in one-letter code: Inosine-5'-monophosphate dehydrogenase (488 aa).

CBS domains follow at residues 93–149 (VVTD…NQPV) and 153–214 (MTPK…CKDE). Residues Asp-248 and 248 to 250 (DSS) each bind NAD(+). Lys-267 is modified (N6-acetyllysine). 298–300 (GIG) provides a ligand contact to NAD(+). Positions 300 and 302 each coordinate K(+). Ser-303 lines the IMP pocket. Cys-305 lines the K(+) pocket. Residue Cys-305 is the Thioimidate intermediate of the active site. Residues 338–340 (DGG), 361–362 (GS), and 385–389 (YRGMG) contribute to the IMP site. Arg-401 acts as the Proton acceptor in catalysis. Glu-415 serves as a coordination point for IMP. Lys-428 bears the N6-acetyllysine mark. Residues Glu-469, Ser-470, and His-471 each coordinate K(+).

The protein belongs to the IMPDH/GMPR family. In terms of assembly, homotetramer. Requires K(+) as cofactor.

The enzyme catalyses IMP + NAD(+) + H2O = XMP + NADH + H(+). It participates in purine metabolism; XMP biosynthesis via de novo pathway; XMP from IMP: step 1/1. Mycophenolic acid (MPA) is a non-competitive inhibitor that prevents formation of the closed enzyme conformation by binding to the same site as the amobile flap. In contrast, mizoribine monophosphate (MZP) is a competitive inhibitor that induces the closed conformation. MPA is a potent inhibitor of mammalian IMPDHs but a poor inhibitor of the bacterial enzymes. MZP is a more potent inhibitor of bacterial IMPDH. Its function is as follows. Catalyzes the conversion of inosine 5'-phosphate (IMP) to xanthosine 5'-phosphate (XMP), the first committed and rate-limiting step in the de novo synthesis of guanine nucleotides, and therefore plays an important role in the regulation of cell growth. The protein is Inosine-5'-monophosphate dehydrogenase of Escherichia coli O157:H7.